The chain runs to 505 residues: Probable folylpolyglutamate synthase (505 aa).

89 to 92 (GKGS) serves as a coordination point for ATP. 3 residues coordinate Mg(2+): Ser121, Glu190, and His218. Residues Arg332 and Asp346 each contribute to the ATP site.

This sequence belongs to the folylpolyglutamate synthase family. The cofactor is a monovalent cation.

Its subcellular location is the mitochondrion inner membrane. The protein resides in the mitochondrion matrix. It localises to the cytoplasm. The enzyme catalyses (6S)-5,6,7,8-tetrahydrofolyl-(gamma-L-Glu)(n) + L-glutamate + ATP = (6S)-5,6,7,8-tetrahydrofolyl-(gamma-L-Glu)(n+1) + ADP + phosphate + H(+). The protein operates within cofactor biosynthesis; tetrahydrofolylpolyglutamate biosynthesis. Functionally, catalyzes conversion of folates to polyglutamate derivatives allowing concentration of folate compounds in the cell and the intracellular retention of these cofactors, which are important substrates for most of the folate-dependent enzymes that are involved in one-carbon transfer reactions involved in purine, pyrimidine and amino acid synthesis. The sequence is that of Probable folylpolyglutamate synthase (met7) from Schizosaccharomyces pombe (strain 972 / ATCC 24843) (Fission yeast).